The primary structure comprises 255 residues: BTB/POZ domain-containing protein KCTD14 (255 aa).

Residues 1–29 (MWQGCAVERPVGRMTSQTPLPQSPRPRRP) form a disordered region. The 98-residue stretch at 33–130 (TVVELNVGGE…LLEDMPQIFG (98 aa)) folds into the BTB domain.

This is BTB/POZ domain-containing protein KCTD14 (KCTD14) from Homo sapiens (Human).